A 698-amino-acid polypeptide reads, in one-letter code: Elongation factor G (698 aa).

A tr-type G domain is found at Asp10–Leu285. Residues Ala19–Thr26, Asp83–His87, and Asn137–Asp140 each bind GTP.

This sequence belongs to the TRAFAC class translation factor GTPase superfamily. Classic translation factor GTPase family. EF-G/EF-2 subfamily.

The protein localises to the cytoplasm. In terms of biological role, catalyzes the GTP-dependent ribosomal translocation step during translation elongation. During this step, the ribosome changes from the pre-translocational (PRE) to the post-translocational (POST) state as the newly formed A-site-bound peptidyl-tRNA and P-site-bound deacylated tRNA move to the P and E sites, respectively. Catalyzes the coordinated movement of the two tRNA molecules, the mRNA and conformational changes in the ribosome. The sequence is that of Elongation factor G from Lactobacillus johnsonii (strain CNCM I-12250 / La1 / NCC 533).